A 312-amino-acid polypeptide reads, in one-letter code: MSKEDIEGTNILDEPVHGIYIPAALFVVGVAITTYMSGELKILWSLPILFMIIFVRAYSAYKRRRSLYPDRWTSLELEDQTIISKNTALYRFKLKTRLESLDIPAGHHVAVRVPIDGKQEVRYYNPISSKLESGYLDLVVKAYVDGKVSKYFAGLNSGDTVDFKGPIGTLNYEPNSSKHLGIVAGGSGITPVLQILNEIITVPEDLTKVSLLYANETENDILLKDELDEMAEKYPHFQVHYVVHYPSDRWTGDVGYITKDQMNRYLPEYSEDNRLLICGPDGMNNLALQYAKELGWKVNSTRSSGDDQVFVF.

Over 1 to 15 (MSKEDIEGTNILDEP) the chain is Extracellular. A helical transmembrane segment spans residues 16–36 (VHGIYIPAALFVVGVAITTYM). Over 37-39 (SGE) the chain is Cytoplasmic. The helical transmembrane segment at 40–60 (LKILWSLPILFMIIFVRAYSA) threads the bilayer. Over 61-179 (YKRRRSLYPD…LNYEPNSSKH (119 aa)) the chain is Extracellular. An FAD-binding FR-type domain is found at 70–173 (DRWTSLELED…KGPIGTLNYE (104 aa)). FAD contacts are provided by residues 153 to 168 (AGLN…GPIG) and 179 to 211 (HLGI…KVSL). The chain crosses the membrane as a helical span at residues 180 to 200 (LGIVAGGSGITPVLQILNEII). Residues 201-312 (TVPEDLTKVS…SSGDDQVFVF (112 aa)) lie on the Cytoplasmic side of the membrane.

This sequence belongs to the flavoprotein pyridine nucleotide cytochrome reductase family. The cofactor is FAD.

The protein localises to the cell membrane. It localises to the endoplasmic reticulum membrane. The catalysed reaction is 2 Fe(III)-[cytochrome b5] + NADH = 2 Fe(II)-[cytochrome b5] + NAD(+) + H(+). Inhibited by diphenylene iodonium (DPI). Its function is as follows. NADH-dependent cytochrome b5 reductase that reduces coenzyme Q6 at the plasma membrane and mediates lifespan extension by calorie restriction by shifting fermentative to respiratory metabolism, probably through modulating the NAD(+)/NADH ratio. This is Plasma membrane-associated coenzyme Q6 reductase PGA3 (PGA3) from Saccharomyces cerevisiae (strain ATCC 204508 / S288c) (Baker's yeast).